A 245-amino-acid chain; its full sequence is tRNA (guanine-N(1)-)-methyltransferase (245 aa).

Residues G112 and 132 to 137 contribute to the S-adenosyl-L-methionine site; that span reads IGDFVL.

This sequence belongs to the RNA methyltransferase TrmD family. As to quaternary structure, homodimer.

The protein localises to the cytoplasm. It carries out the reaction guanosine(37) in tRNA + S-adenosyl-L-methionine = N(1)-methylguanosine(37) in tRNA + S-adenosyl-L-homocysteine + H(+). Functionally, specifically methylates guanosine-37 in various tRNAs. The sequence is that of tRNA (guanine-N(1)-)-methyltransferase from Geobacter metallireducens (strain ATCC 53774 / DSM 7210 / GS-15).